A 233-amino-acid chain; its full sequence is CDP-diacylglycerol--glycerol-3-phosphate 3-phosphatidyltransferase 2 (233 aa).

The tract at residues 1 to 23 is disordered; the sequence is MGEEDTATVDQNSFGGGKDSLLR. 5 helical membrane-spanning segments follow: residues 40–60, 71–91, 100–120, 125–145, and 201–221; these read VITLPTVLTLGRVAAVPILVA, TATTSIFIAAAITDWLDGYIA, FGAFLDPVADKLMVAATLILL, MVAVVLGPVPWLVTVPSIAII, and LPSGIGLLYVSAGLSIWSLVV.

This sequence belongs to the CDP-alcohol phosphatidyltransferase class-I family. Requires Mn(2+) as cofactor.

It is found in the microsome membrane. Its subcellular location is the endoplasmic reticulum membrane. It catalyses the reaction a CDP-1,2-diacyl-sn-glycerol + sn-glycerol 3-phosphate = a 1,2-diacyl-sn-glycero-3-phospho-(1'-sn-glycero-3'-phosphate) + CMP + H(+). It functions in the pathway phospholipid metabolism; phosphatidylglycerol biosynthesis; phosphatidylglycerol from CDP-diacylglycerol: step 1/2. In terms of biological role, catalyzes the committed step to the synthesis of the acidic phospholipids, including phosphatidylglycerol (PG). Together with PGPS1, required for the proper embryo development by providing PG accurate levels. The sequence is that of CDP-diacylglycerol--glycerol-3-phosphate 3-phosphatidyltransferase 2 from Arabidopsis thaliana (Mouse-ear cress).